The sequence spans 277 residues: tRNA pseudouridine synthase B (277 aa).

Aspartate 38 (nucleophile) is an active-site residue.

Belongs to the pseudouridine synthase TruB family. Type 1 subfamily.

It catalyses the reaction uridine(55) in tRNA = pseudouridine(55) in tRNA. Functionally, responsible for synthesis of pseudouridine from uracil-55 in the psi GC loop of transfer RNAs. This is tRNA pseudouridine synthase B from Sulfurovum sp. (strain NBC37-1).